The primary structure comprises 79 residues: Centromere protein X (79 aa).

At methionine 1 the chain carries N-acetylmethionine.

Belongs to the CENP-X/MHF2 family. In terms of assembly, heterodimer with CENPX, sometimes called MHF; this interaction stabilizes both partners. MHF heterodimers can assemble to form tetrameric structures. MHF also coassemble with CENPT-CENPW heterodimers at centromeres to form the tetrameric CENP-T-W-S-X complex. Forms a discrete complex with FANCM and CENPX, called FANCM-MHF; this interaction, probably mediated by direct binding between CENPS and FANCM, leads to synergistic activation of double-stranded DNA binding and strongly stimulates FANCM-mediated DNA remodeling. Recruited by FANCM to the Fanconi anemia (FA) core complex, which consists of CENPS, CENPX, FANCA, FANCB, FANCC, FANCE, FANCF, FANCG, FANCL, FANCM, FAAP24 and FAAP100. The FA core complex associates with Bloom syndrome (BLM) complex, which consists of at least BLM, DNA topoisomerase 3-alpha (TOP3A), RMI1/BLAP75, RPA1/RPA70 and RPA2/RPA32. The super complex between FA and BLM is called BRAFT.

The protein resides in the nucleus. It is found in the chromosome. Its subcellular location is the centromere. The protein localises to the kinetochore. DNA-binding component of the Fanconi anemia (FA) core complex. Required for the normal activation of the FA pathway, leading to monoubiquitination of the FANCI-FANCD2 complex in response to DNA damage, cellular resistance to DNA cross-linking drugs, and prevention of chromosomal breakage. In complex with CENPS (MHF heterodimer), crucial cofactor for FANCM in both binding and ATP-dependent remodeling of DNA. Stabilizes FANCM. In complex with CENPS and FANCM (but not other FANC proteins), rapidly recruited to blocked forks and promotes gene conversion at blocked replication forks. In complex with CENPS, CENPT and CENPW (CENP-T-W-S-X heterotetramer), involved in the formation of a functional kinetochore outer plate, which is essential for kinetochore-microtubule attachment and faithful mitotic progression. As a component of MHF and CENP-T-W-S-X complexes, binds DNA and bends it to form a nucleosome-like structure. DNA-binding function is fulfilled in the presence of CENPS, with the following preference for DNA substates: Holliday junction &gt; double-stranded &gt; splay arm &gt; single-stranded. Does not bind DNA on its own. This Bos taurus (Bovine) protein is Centromere protein X (CENPX).